A 583-amino-acid polypeptide reads, in one-letter code: MSKKARFGVVLVVLAACSGFLFPTLQWYFLTDAQTRQRALSSREQIKEYAVQSAERDLADLTRLARAGSDEDISARYAPLVAAARQNLSYSGRPAPSRWTAAALVSAFPVKSEQGFVLYARPLMEQTYREAVLKMKRRQAQAVKLGLDLSGGTSVVIKADLSEVTKGVPDAERAAIRSEAMALVLSTLENRINRFGLSEPVIRRQGEDRVYVEIPGLTDRDRVHSIVMGRGVLAFHLVDDDATQKLLDHYRNNPQGTFDAAHQLHDLSLVPEHTSVLGVYRKDSYGLDVRDGFLVVKKEPALEGRHIRDATVSSGRANEPLVLFDLDHEGARIFSELTTKEIGRRLAIVSDGKIRSAPAIREPITAGSGSISGFSAEEAQNLKTALRSAWLNVALEIENQQVVGASMGEESIRQGTRALVWGLCAVLLFMLVWYQEAGVNACVAQLLNLYIMFGVLSAFNLTLTLSSIAGMILTIGMAVDANVVVFERIREELALGKSRGAAVCSGFERAFWAIMDSNVTTFIAALFLSVLGTGPIKGFAYSLAIGVVSSVFTALFVSRLMFDYGTEVLHKKTVRIGWRIARV.

The next 6 helical transmembrane spans lie at 7-27, 419-439, 446-468, 469-489, 511-531, and 538-558; these read FGVV…TLQW, LVWG…EAGV, LLNL…LSSI, AGMI…FERI, FWAI…LSVL, and GFAY…LFVS.

It belongs to the SecD/SecF family. SecD subfamily. As to quaternary structure, forms a complex with SecF. Part of the essential Sec protein translocation apparatus which comprises SecA, SecYEG and auxiliary proteins SecDF. Other proteins may also be involved.

The protein resides in the cell inner membrane. Functionally, part of the Sec protein translocase complex. Interacts with the SecYEG preprotein conducting channel. SecDF uses the proton motive force (PMF) to complete protein translocation after the ATP-dependent function of SecA. In Treponema pallidum (strain Nichols), this protein is Protein translocase subunit SecD.